The following is a 419-amino-acid chain: Glutamyl-tRNA reductase (419 aa).

Substrate is bound by residues 49 to 52 (TCNR), serine 107, 112 to 114 (EPQ), and glutamine 118. Residue cysteine 50 is the Nucleophile of the active site. Position 187-192 (187-192 (GAGETI)) interacts with NADP(+).

It belongs to the glutamyl-tRNA reductase family. In terms of assembly, homodimer.

The enzyme catalyses (S)-4-amino-5-oxopentanoate + tRNA(Glu) + NADP(+) = L-glutamyl-tRNA(Glu) + NADPH + H(+). Its pathway is porphyrin-containing compound metabolism; protoporphyrin-IX biosynthesis; 5-aminolevulinate from L-glutamyl-tRNA(Glu): step 1/2. Its function is as follows. Catalyzes the NADPH-dependent reduction of glutamyl-tRNA(Glu) to glutamate 1-semialdehyde (GSA). The polypeptide is Glutamyl-tRNA reductase (Psychromonas ingrahamii (strain DSM 17664 / CCUG 51855 / 37)).